Reading from the N-terminus, the 183-residue chain is A-type ATP synthase subunit E (183 aa).

The protein belongs to the V-ATPase E subunit family. As to quaternary structure, has multiple subunits, A(3), B(3), C, D, E, F, G, I and K(x); there may be a few other subunits as well.

Its subcellular location is the cell membrane. In terms of biological role, component of the A-type ATP synthase that produces ATP from ADP in the presence of a proton gradient across the membrane. This chain is A-type ATP synthase subunit E, found in Methanosarcina mazei (strain ATCC BAA-159 / DSM 3647 / Goe1 / Go1 / JCM 11833 / OCM 88) (Methanosarcina frisia).